An 88-amino-acid chain; its full sequence is Exodeoxyribonuclease 7 small subunit (88 aa).

The segment at 69 to 88 is disordered; sequence DPMRPDDGEPFDPSIVSTSQ.

This sequence belongs to the XseB family. As to quaternary structure, heterooligomer composed of large and small subunits.

The protein localises to the cytoplasm. It carries out the reaction Exonucleolytic cleavage in either 5'- to 3'- or 3'- to 5'-direction to yield nucleoside 5'-phosphates.. Bidirectionally degrades single-stranded DNA into large acid-insoluble oligonucleotides, which are then degraded further into small acid-soluble oligonucleotides. This is Exodeoxyribonuclease 7 small subunit from Xylella fastidiosa (strain M12).